A 154-amino-acid chain; its full sequence is Phosphopantetheine adenylyltransferase (154 aa).

Thr10 contributes to the substrate binding site. Residues Thr10–Phe11 and His18 each bind ATP. The substrate site is built by Lys42, Leu74, and Arg88. Residues Gly89 to Arg91, Glu99, and Asn124 to Ser130 each bind ATP.

This sequence belongs to the bacterial CoaD family. Homohexamer. It depends on Mg(2+) as a cofactor.

Its subcellular location is the cytoplasm. It catalyses the reaction (R)-4'-phosphopantetheine + ATP + H(+) = 3'-dephospho-CoA + diphosphate. Its pathway is cofactor biosynthesis; coenzyme A biosynthesis; CoA from (R)-pantothenate: step 4/5. Reversibly transfers an adenylyl group from ATP to 4'-phosphopantetheine, yielding dephospho-CoA (dPCoA) and pyrophosphate. The polypeptide is Phosphopantetheine adenylyltransferase (Nautilia profundicola (strain ATCC BAA-1463 / DSM 18972 / AmH)).